Here is a 95-residue protein sequence, read N- to C-terminus: Aspartyl/glutamyl-tRNA(Asn/Gln) amidotransferase subunit C (95 aa).

This sequence belongs to the GatC family. As to quaternary structure, heterotrimer of A, B and C subunits.

It carries out the reaction L-glutamyl-tRNA(Gln) + L-glutamine + ATP + H2O = L-glutaminyl-tRNA(Gln) + L-glutamate + ADP + phosphate + H(+). The catalysed reaction is L-aspartyl-tRNA(Asn) + L-glutamine + ATP + H2O = L-asparaginyl-tRNA(Asn) + L-glutamate + ADP + phosphate + 2 H(+). In terms of biological role, allows the formation of correctly charged Asn-tRNA(Asn) or Gln-tRNA(Gln) through the transamidation of misacylated Asp-tRNA(Asn) or Glu-tRNA(Gln) in organisms which lack either or both of asparaginyl-tRNA or glutaminyl-tRNA synthetases. The reaction takes place in the presence of glutamine and ATP through an activated phospho-Asp-tRNA(Asn) or phospho-Glu-tRNA(Gln). In Chlorobium phaeobacteroides (strain DSM 266 / SMG 266 / 2430), this protein is Aspartyl/glutamyl-tRNA(Asn/Gln) amidotransferase subunit C.